Consider the following 124-residue polypeptide: Tax1-binding protein 3 homolog (124 aa).

One can recognise a PDZ domain in the interval 18–106; it reads AVELHKQEVI…DRAVKFIKQS (89 aa).

In terms of biological role, may regulate a number of protein-protein interactions by competing for PDZ domain binding sites. This chain is Tax1-binding protein 3 homolog, found in Caenorhabditis elegans.